A 680-amino-acid chain; its full sequence is Fermitin family homolog 2 (680 aa).

The interval His40–Lys81 is interaction with membranes containing phosphatidylinositol phosphate. Residues Leu141–Glu165 form a disordered region. Residues Ser159, Ser181, Ser339, and Ser351 each carry the phosphoserine modification. Residues Met189–Lys661 enclose the FERM domain. The PH domain occupies Lys380–Lys476. Lys383 provides a ligand contact to a 1,2-diacyl-sn-glycero-3-phospho-(1D-myo-inositol-3,4,5-trisphosphate). Ser666 is modified (phosphoserine).

It belongs to the kindlin family. In terms of assembly, interacts with ILK. Interacts with FBLIM1. Interacts with ITGB1 and ITGB3. Interacts with active, unphosphorylated CTNNB1. Identified in a complex with CTNNB1 and TCF7L2/TCF4. Interacts with ITGB1; the interaction is inhibited in presence of ITGB1BP1. In terms of tissue distribution, ubiquitous. Found in numerous tumor tissues.

Its subcellular location is the cytoplasm. It is found in the cell cortex. The protein localises to the cytoskeleton. The protein resides in the stress fiber. It localises to the cell junction. Its subcellular location is the focal adhesion. It is found in the membrane. The protein localises to the cell projection. The protein resides in the lamellipodium membrane. It localises to the nucleus. Its subcellular location is the myofibril. It is found in the sarcomere. The protein localises to the i band. The protein resides in the cell surface. Scaffolding protein that enhances integrin activation mediated by TLN1 and/or TLN2, but activates integrins only weakly by itself. Binds to membranes enriched in phosphoinositides. Enhances integrin-mediated cell adhesion onto the extracellular matrix and cell spreading; this requires both its ability to interact with integrins and with phospholipid membranes. Required for the assembly of focal adhesions. Participates in the connection between extracellular matrix adhesion sites and the actin cytoskeleton and also in the orchestration of actin assembly and cell shape modulation. Recruits FBLIM1 to focal adhesions. Plays a role in the TGFB1 and integrin signaling pathways. Stabilizes active CTNNB1 and plays a role in the regulation of transcription mediated by CTNNB1 and TCF7L2/TCF4 and in Wnt signaling. The protein is Fermitin family homolog 2 (FERMT2) of Homo sapiens (Human).